Consider the following 118-residue polypeptide: Large ribosomal subunit protein bL20 (118 aa).

Belongs to the bacterial ribosomal protein bL20 family.

Functionally, binds directly to 23S ribosomal RNA and is necessary for the in vitro assembly process of the 50S ribosomal subunit. It is not involved in the protein synthesizing functions of that subunit. The chain is Large ribosomal subunit protein bL20 from Protochlamydia amoebophila (strain UWE25).